The following is a 315-amino-acid chain: 10-epi-cubebol synthase (315 aa).

4 residues coordinate Mg(2+): aspartate 79, asparagine 220, serine 224, and glutamate 228. The DDXXD motif motif lies at 79 to 83; that stretch reads DDVCE. Residues 220–228 carry the NXXXSXXXE motif motif; the sequence is NDIYSLRKE.

The protein belongs to the terpene synthase family. Requires Mg(2+) as cofactor.

The enzyme catalyses (2E,6E)-farnesyl diphosphate + H2O = 10-epi-cubebol + diphosphate. Its function is as follows. Catalyzes the cyclization of farnesyl diphosphate (FPP) to 10-epi-cubebol. Is also responsible for the formation of many other sesquiterpenes, mainly cadalanes and cubebanes, including 1,10-di-epi-cubebol and the cadalanes delta-cadinene, T-cadinol and alpha-cadinol. The chain is 10-epi-cubebol synthase from Sorangium cellulosum (strain So ce56) (Polyangium cellulosum (strain So ce56)).